Here is a 1078-residue protein sequence, read N- to C-terminus: Phosphatidylinositol-3,5-bisphosphate 3-phosphatase MTMR4 (1078 aa).

The 418-residue stretch at 154 to 571 (DHVKSRFQIE…RALQLWTAVY (418 aa)) folds into the Myotubularin phosphatase domain. The tract at residues 267–290 (RMPNGNPSNKGNNDGSDNSDTDFD) is disordered. Over residues 270–282 (NGNPSNKGNNDGS) the composition is skewed to low complexity. Residues Asn-321, Asn-346, and Ile-347 each coordinate a 1,2-diacyl-sn-glycero-3-phospho-(1D-myo-inositol-3,5-bisphosphate). Residues Asn-321, Asn-346, and Ile-347 each coordinate a 1,2-diacyl-sn-glycero-3-phospho-(1D-myo-inositol-3-phosphate). The active-site Phosphocysteine intermediate is Cys-408. Ser-409, Asp-410, Gly-411, Trp-412, Asp-413, Arg-414, Lys-450, and Arg-454 together coordinate a 1,2-diacyl-sn-glycero-3-phospho-(1D-myo-inositol-3,5-bisphosphate). A 1,2-diacyl-sn-glycero-3-phospho-(1D-myo-inositol-3-phosphate) is bound by residues Ser-409, Asp-410, Gly-411, Trp-412, Asp-413, and Arg-414. Residue Arg-454 participates in a 1,2-diacyl-sn-glycero-3-phospho-(1D-myo-inositol-3-phosphate) binding. Residues 629–648 (SSDPNLNNHQGNLESCSSSK) show a composition bias toward polar residues. A disordered region spans residues 629–694 (SSDPNLNNHQ…SGSATNQNNN (66 aa)). The stretch at 904 to 935 (VQQRLRQMEASYKQEVDLLRRQVWELQLQLEI) forms a coiled coil. Residues 960–982 (DGSDMDDLYSDKSEDRLSEASWE) are disordered. The span at 968 to 982 (YSDKSEDRLSEASWE) shows a compositional bias: basic and acidic residues. The segment at 997–1057 (DHMASHCFNC…VCNTCYDHIQ (61 aa)) adopts an FYVE-type zinc-finger fold. Cys-1003, Cys-1006, Cys-1019, Cys-1022, Cys-1027, Cys-1030, Cys-1049, and Cys-1052 together coordinate Zn(2+).

The protein belongs to the protein-tyrosine phosphatase family. Non-receptor class myotubularin subfamily. In terms of assembly, homooligomeric.

The protein localises to the early endosome membrane. Its subcellular location is the recycling endosome membrane. The protein resides in the late endosome membrane. It localises to the cytoplasmic vesicle. It is found in the phagosome membrane. It catalyses the reaction a 1,2-diacyl-sn-glycero-3-phospho-(1D-myo-inositol-3-phosphate) + H2O = a 1,2-diacyl-sn-glycero-3-phospho-(1D-myo-inositol) + phosphate. The catalysed reaction is a 1,2-diacyl-sn-glycero-3-phospho-(1D-myo-inositol-3,5-bisphosphate) + H2O = a 1,2-diacyl-sn-glycero-3-phospho-(1D-myo-inositol-5-phosphate) + phosphate. The enzyme catalyses 1,2-dioctanoyl-sn-glycero-3-phospho-(1-D-myo-inositol-3-phosphate) + H2O = 1,2-dioctanoyl-sn-glycero-3-phospho-(1D-myo-inositol) + phosphate. It carries out the reaction 1,2-dioctanoyl-sn-glycero-3-phospho-(1D-myo-inositol-3,5-bisphosphate) + H2O = 1,2-dioctanoyl-sn-glycero-3-phospho-(1D-myo-inositol-5-phosphate) + phosphate. Lipid phosphatase that specifically dephosphorylates the D-3 position of phosphatidylinositol 3-phosphate and phosphatidylinositol 3,5-bisphosphate, generating phosphatidylinositol and phosphatidylinositol 5-phosphate. Decreases the levels of phosphatidylinositol 3-phosphate, a phospholipid found in cell membranes where it acts as key regulator of both cell signaling and intracellular membrane traffic, in a subset of endosomal membranes to negatively regulate both endocytic recycling and trafficking and/or maturation of endosomes toward lysosomes. Through phosphatidylinositol 3-phosphate turnover in phagosome membranes regulates phagocytosis and phagosome maturation. By decreasing phosphatidylinositol 3-monophosphate (PI3P) levels in immune cells it can also regulate the innate immune response. Beside its lipid phosphatase activity, can also function as a molecular adapter to regulate midbody abscission during mitotic cytokinesis. Can also negatively regulate TGF-beta and BMP signaling through Smad proteins dephosphorylation and retention in endosomes. The protein is Phosphatidylinositol-3,5-bisphosphate 3-phosphatase MTMR4 (mtmr4) of Xenopus laevis (African clawed frog).